A 246-amino-acid polypeptide reads, in one-letter code: Probable phosphatase Tola_0828 (246 aa).

Zn(2+) contacts are provided by histidine 8, histidine 10, histidine 16, histidine 41, glutamate 74, histidine 102, histidine 132, aspartate 193, and histidine 195.

This sequence belongs to the PHP family. Requires Zn(2+) as cofactor.

The protein is Probable phosphatase Tola_0828 of Tolumonas auensis (strain DSM 9187 / NBRC 110442 / TA 4).